Consider the following 172-residue polypeptide: Cytochrome b6-f complex iron-sulfur subunit (172 aa).

A helical membrane pass occupies residues 19 to 39 (LNALLSGSVGVVVVGALYPVV). One can recognise a Rieske domain in the interval 61–161 (GKPISVSELL…ATVDGDNVRF (101 aa)). Positions 107, 109, 125, and 128 each coordinate [2Fe-2S] cluster. Cys112 and Cys127 form a disulfide bridge.

This sequence belongs to the Rieske iron-sulfur protein family. The 4 large subunits of the cytochrome b6-f complex are cytochrome b6, subunit IV (17 kDa polypeptide, PetD), cytochrome f and the Rieske protein, while the 4 small subunits are PetG, PetL, PetM and PetN. The complex functions as a dimer. Requires [2Fe-2S] cluster as cofactor.

The protein resides in the cellular thylakoid membrane. The enzyme catalyses 2 oxidized [plastocyanin] + a plastoquinol + 2 H(+)(in) = 2 reduced [plastocyanin] + a plastoquinone + 4 H(+)(out). Component of the cytochrome b6-f complex, which mediates electron transfer between photosystem II (PSII) and photosystem I (PSI), cyclic electron flow around PSI, and state transitions. This chain is Cytochrome b6-f complex iron-sulfur subunit, found in Synechococcus sp. (strain JA-2-3B'a(2-13)) (Cyanobacteria bacterium Yellowstone B-Prime).